The primary structure comprises 350 residues: Dihydroorotate dehydrogenase (quinone) (350 aa).

FMN is bound by residues 67-71 (AGFDK) and glycine 91. Lysine 71 serves as a coordination point for substrate. 116 to 120 (NRMGL) serves as a coordination point for substrate. Asparagine 144 and asparagine 177 together coordinate FMN. Residue asparagine 177 participates in substrate binding. Cysteine 180 (nucleophile) is an active-site residue. Asparagine 182 contributes to the substrate binding site. FMN is bound by residues lysine 213 and threonine 241. Residue 242–243 (NT) coordinates substrate. Positions 245 to 265 (TERPASLRSPNAVETGGLSGK) are disordered. FMN-binding positions include glycine 264, glycine 291, and 312-313 (YT).

Belongs to the dihydroorotate dehydrogenase family. Type 2 subfamily. Monomer. Requires FMN as cofactor.

It localises to the cell membrane. It catalyses the reaction (S)-dihydroorotate + a quinone = orotate + a quinol. It participates in pyrimidine metabolism; UMP biosynthesis via de novo pathway; orotate from (S)-dihydroorotate (quinone route): step 1/1. Functionally, catalyzes the conversion of dihydroorotate to orotate with quinone as electron acceptor. The chain is Dihydroorotate dehydrogenase (quinone) (pyrD) from Haloarcula marismortui (strain ATCC 43049 / DSM 3752 / JCM 8966 / VKM B-1809) (Halobacterium marismortui).